Here is a 353-residue protein sequence, read N- to C-terminus: MTTALRQRESANAWEQFCQWIASTENRLYVGWFGVIMIPTLLTATICFIIAFIAAPPVDIDGIREPVAGSLMYGNNIISGAVVPSSNAIGLHFYPIWEAASMDEWLYNGGPYQLVVFHFLIGIFCYMGREWELSYRLGMRPWICVAYSAPVAAATAVFLIYPLGQGSFSDGMPLGISGTFNFMLVFQAEHNILMHPFHMLGVAGVFGGSLFSAMHGSLVTSSLVRETSENESQNYGYKFGQEEETYNIVAAHGYFGRLIFQYASFNNSRALHFFLAAWPVVGIWFTSLGISTMAFNLNGFNFNQSVMDSQGRVISTWADILNRANLGFEVMHERNAHNFPLDLAAVKAPSIIG.

Transmembrane regions (helical) follow at residues 29-46 (YVGW…TATI), 118-133 (HFLI…EWEL), and 142-156 (WICV…AATA). Chlorophyll a is bound at residue His-118. Pheophytin a is bound at residue Tyr-126. Positions 170 and 189 each coordinate [CaMn4O5] cluster. The chain crosses the membrane as a helical span at residues 197–218 (FHMLGVAGVFGGSLFSAMHGSL). A chlorophyll a-binding site is contributed by His-198. A quinone is bound by residues His-215 and 264 to 265 (SF). His-215 is a binding site for Fe cation. His-272 provides a ligand contact to Fe cation. Residues 274 to 288 (FLAAWPVVGIWFTSL) traverse the membrane as a helical segment. The [CaMn4O5] cluster site is built by His-332, Glu-333, Asp-342, and Ala-344. The propeptide occupies 345-353 (AVKAPSIIG).

The protein belongs to the reaction center PufL/M/PsbA/D family. PSII is composed of 1 copy each of membrane proteins PsbA, PsbB, PsbC, PsbD, PsbE, PsbF, PsbH, PsbI, PsbJ, PsbK, PsbL, PsbM, PsbT, PsbX, PsbY, PsbZ, Psb30/Ycf12, peripheral proteins PsbO, CyanoQ (PsbQ), PsbU, PsbV and a large number of cofactors. It forms dimeric complexes. The D1/D2 heterodimer binds P680, chlorophylls that are the primary electron donor of PSII, and subsequent electron acceptors. It shares a non-heme iron and each subunit binds pheophytin, quinone, additional chlorophylls, carotenoids and lipids. D1 provides most of the ligands for the Mn4-Ca-O5 cluster of the oxygen-evolving complex (OEC). There is also a Cl(-1) ion associated with D1 and D2, which is required for oxygen evolution. The PSII complex binds additional chlorophylls, carotenoids and specific lipids. is required as a cofactor. In terms of processing, tyr-161 forms a radical intermediate that is referred to as redox-active TyrZ, YZ or Y-Z. C-terminally processed by CtpA; processing is essential to allow assembly of the oxygen-evolving complex and thus photosynthetic growth.

Its subcellular location is the cellular thylakoid membrane. The enzyme catalyses 2 a plastoquinone + 4 hnu + 2 H2O = 2 a plastoquinol + O2. Functionally, photosystem II (PSII) is a light-driven water:plastoquinone oxidoreductase that uses light energy to abstract electrons from H(2)O, generating O(2) and a proton gradient subsequently used for ATP formation. It consists of a core antenna complex that captures photons, and an electron transfer chain that converts photonic excitation into a charge separation. The D1/D2 (PsbA/PsbD) reaction center heterodimer binds P680, the primary electron donor of PSII as well as several subsequent electron acceptors. This chain is Photosystem II protein D1, found in Prochlorothrix hollandica.